We begin with the raw amino-acid sequence, 656 residues long: Choline transporter-like protein 3 (656 aa).

Residues 37–57 form a helical membrane-spanning segment; sequence WLVLFFLFWTGLVFIMGYSVV. Asn-141 and Asn-154 each carry an N-linked (GlcNAc...) asparagine glycan. The next 5 membrane-spanning stretches (helical) occupy residues 216–236, 242–262, 288–308, 337–357, and 381–401; these read DTIL…LFAF, LLIH…CGVL, LAFA…IFTL, LWTC…LLSL, and YMWW…LACQ. N-linked (GlcNAc...) asparagine glycans are attached at residues Asn-506 and Asn-524. A helical membrane pass occupies residues 537–557; it reads FVIFLGKVLVVCFSIFGGLMA. A glycan (N-linked (GlcNAc...) asparagine) is linked at Asn-559. Residues 566–586 traverse the membrane as a helical segment; sequence VWAIPLLLVAFFACVVAHSFL. The interval 634 to 656 is disordered; the sequence is AKSQGQKDALPNEEGTELQPIVR.

The protein belongs to the CTL (choline transporter-like) family.

Its subcellular location is the membrane. The sequence is that of Choline transporter-like protein 3 (Slc44a3) from Mus musculus (Mouse).